The following is a 190-amino-acid chain: Peptide deformylase (190 aa).

Residues Cys94 and His136 each coordinate Fe cation. The active site involves Glu137. His140 is a binding site for Fe cation.

Belongs to the polypeptide deformylase family. It depends on Fe(2+) as a cofactor.

The enzyme catalyses N-terminal N-formyl-L-methionyl-[peptide] + H2O = N-terminal L-methionyl-[peptide] + formate. Functionally, removes the formyl group from the N-terminal Met of newly synthesized proteins. Requires at least a dipeptide for an efficient rate of reaction. N-terminal L-methionine is a prerequisite for activity but the enzyme has broad specificity at other positions. This Chlorobium phaeovibrioides (strain DSM 265 / 1930) (Prosthecochloris vibrioformis (strain DSM 265)) protein is Peptide deformylase.